The chain runs to 184 residues: Small ribosomal subunit protein eS8 (184 aa).

Residues 1–23 (MGISRDSRHKRRLTGGRYPVHKK) are disordered. Positions 7 to 23 (SRHKRRLTGGRYPVHKK) are enriched in basic residues.

This sequence belongs to the eukaryotic ribosomal protein eS8 family.

The polypeptide is Small ribosomal subunit protein eS8 (RPS8) (Theileria annulata).